The sequence spans 885 residues: DNA polymerase eta (885 aa).

The region spanning 18–274 (VLLVDMDCFF…LPVGKIKGLG (257 aa)) is the UmuC domain. Mg(2+) is bound by residues aspartate 22 and methionine 23. Mn(2+)-binding residues include aspartate 22 and methionine 23. Arginine 70 provides a ligand contact to a 2'-deoxyribonucleoside 5'-triphosphate. 2 residues coordinate Mg(2+): aspartate 125 and glutamate 126. Mn(2+) is bound by residues aspartate 125 and glutamate 126. Residue glutamate 126 is part of the active site. Disordered stretches follow at residues 599-653 (AIEA…DLYV) and 658-677 (VPPTLTEDELKPSTSKRKFD). Residues 608–618 (FEEDTEEETEL) are compositionally biased toward acidic residues. Residues 628-649 (EGQSSDAGQEQDPNTLNDSTGN) show a composition bias toward polar residues. The UBZ3-type 1 zinc-finger motif lies at 701 to 737 (DILPTIKCDQCGANIPDEVKSLQTHRDHHFAQELSRT). Residues cysteine 708, cysteine 711, histidine 725, and histidine 729 each coordinate Zn(2+). Positions 722-783 (LQTHRDHHFA…YSTAPPSNSI (62 aa)) are disordered. Residues 739–748 (RSTEREERTQ) show a composition bias toward basic and acidic residues. Over residues 766-780 (TAGSGSSSYSTAPPS) the composition is skewed to low complexity. The UBZ3-type 2 zinc-finger motif lies at 798–832 (SDPQMNQCPECKAFIKCVDMPEHLDYHVARNLQRE). The Zn(2+) site is built by cysteine 805, cysteine 808, histidine 820, and histidine 824. Residues 846-870 (NKEKISPVQPKKQSQKKLNSTISAS) form a disordered region.

This sequence belongs to the DNA polymerase type-Y family. In terms of assembly, interacts (via C-terminus) with nopo. It depends on Mg(2+) as a cofactor. Mn(2+) serves as cofactor. In terms of processing, ubiquitination enhanced by nopo. In terms of tissue distribution, expressed in ovaries and testes.

The protein localises to the nucleus. The catalysed reaction is DNA(n) + a 2'-deoxyribonucleoside 5'-triphosphate = DNA(n+1) + diphosphate. With respect to regulation, the enzyme in complex with the DNA substrate binds a third divalent metal cation. This binding is essential for catalyzing the DNA synthesis. In terms of biological role, DNA polymerase specifically involved in the DNA repair by translesion synthesis (TLS). Plays an important role in translesion synthesis, where the normal high-fidelity DNA polymerases cannot proceed and DNA synthesis stalls. Inserts one or 2 nucleotide(s) opposite the lesion. During homologous recombination (HR) repair, has a overlapping role with the error-prone translesion polymerase PolZ1/DNApol-zeta to initiate repair synthesis that is completed by end joining or another polymerase that can bind and reinitiate synthesis. Particularly important for the repair of UV-induced pyrimidine dimers and for hydroxyurea (HU)-induced DNA damage. Although inserts the correct base, may cause base transitions and transversions depending upon the context. Forms a Schiff base with 5'-deoxyribose phosphate at abasic sites, but does not have any lyase activity, preventing the release of the 5'-deoxyribose phosphate (5'-dRP) residue. This covalent trapping of the enzyme by the 5'-dRP residue inhibits its DNA synthetic activity during base excision repair, thereby avoiding high incidence of mutagenesis. The chain is DNA polymerase eta from Drosophila melanogaster (Fruit fly).